The chain runs to 101 residues: NAD(P)H-quinone oxidoreductase subunit 4L, chloroplastic (101 aa).

3 helical membrane-spanning segments follow: residues 2–22 (ILEH…YGLI), 32–52 (MCLE…SDFF), and 61–81 (IFSI…LAIV).

It belongs to the complex I subunit 4L family. In terms of assembly, NDH is composed of at least 16 different subunits, 5 of which are encoded in the nucleus.

It localises to the plastid. It is found in the chloroplast thylakoid membrane. The enzyme catalyses a plastoquinone + NADH + (n+1) H(+)(in) = a plastoquinol + NAD(+) + n H(+)(out). It catalyses the reaction a plastoquinone + NADPH + (n+1) H(+)(in) = a plastoquinol + NADP(+) + n H(+)(out). Its function is as follows. NDH shuttles electrons from NAD(P)H:plastoquinone, via FMN and iron-sulfur (Fe-S) centers, to quinones in the photosynthetic chain and possibly in a chloroplast respiratory chain. The immediate electron acceptor for the enzyme in this species is believed to be plastoquinone. Couples the redox reaction to proton translocation, and thus conserves the redox energy in a proton gradient. In Nicotiana sylvestris (Wood tobacco), this protein is NAD(P)H-quinone oxidoreductase subunit 4L, chloroplastic.